Here is an 856-residue protein sequence, read N- to C-terminus: DNA mismatch repair protein MutS (856 aa).

Residue Gly-609 to Ser-616 participates in ATP binding.

Belongs to the DNA mismatch repair MutS family.

Functionally, this protein is involved in the repair of mismatches in DNA. It is possible that it carries out the mismatch recognition step. This protein has a weak ATPase activity. This Finegoldia magna (strain ATCC 29328 / DSM 20472 / WAL 2508) (Peptostreptococcus magnus) protein is DNA mismatch repair protein MutS.